The chain runs to 465 residues: uncharacterized protein (465 aa).

The next 11 helical transmembrane spans lie at 19 to 39, 50 to 70, 91 to 111, 140 to 160, 164 to 184, 201 to 221, 244 to 264, 288 to 308, 342 to 362, 363 to 383, and 403 to 423; these read VLGP…GEYM, MIAG…VAMI, IVGP…YTML, FIVL…LATL, LVIT…VQFG, PYGW…YLGI, AGIM…SGLM, LMVL…NGCI, IVFL…DQVV, TFSI…MVMF, and LPTV…FLGY.

It belongs to the amino acid-polyamine-organocation (APC) superfamily.

Its subcellular location is the cell membrane. Functionally, probable amino-acid or metabolite transport protein. This is an uncharacterized protein from Rhizobium meliloti (strain 1021) (Ensifer meliloti).